A 125-amino-acid chain; its full sequence is Large ribosomal subunit protein uL22 (125 aa).

The protein belongs to the universal ribosomal protein uL22 family. Part of the 50S ribosomal subunit.

In terms of biological role, this protein binds specifically to 23S rRNA; its binding is stimulated by other ribosomal proteins, e.g. L4, L17, and L20. It is important during the early stages of 50S assembly. It makes multiple contacts with different domains of the 23S rRNA in the assembled 50S subunit and ribosome. Its function is as follows. The globular domain of the protein is located near the polypeptide exit tunnel on the outside of the subunit, while an extended beta-hairpin is found that lines the wall of the exit tunnel in the center of the 70S ribosome. The sequence is that of Large ribosomal subunit protein uL22 from Erythrobacter litoralis (strain HTCC2594).